The sequence spans 153 residues: Large ribosomal subunit protein uL13 (153 aa).

The tract at residues S128 to A153 is disordered. Residues T143 to A153 are compositionally biased toward polar residues.

The protein belongs to the universal ribosomal protein uL13 family. Part of the 50S ribosomal subunit.

Its function is as follows. This protein is one of the early assembly proteins of the 50S ribosomal subunit, although it is not seen to bind rRNA by itself. It is important during the early stages of 50S assembly. This chain is Large ribosomal subunit protein uL13, found in Roseobacter denitrificans (strain ATCC 33942 / OCh 114) (Erythrobacter sp. (strain OCh 114)).